Here is a 210-residue protein sequence, read N- to C-terminus: Transposable element activator uncharacterized 23 kDa protein (210 aa).

Basic and acidic residues predominate over residues 67–78 (SGRMGGPRRDGR). The segment at 67 to 87 (SGRMGGPRRDGRVASSGVEGG) is disordered.

The chain is Transposable element activator uncharacterized 23 kDa protein from Zea mays (Maize).